Reading from the N-terminus, the 1194-residue chain is UPF0507 protein PICST_55861 (1194 aa).

The VPS9 domain maps to 324-475 (QSYDPEAVKF…LSSSLSDELS (152 aa)).

The protein belongs to the UPF0507 family.

This Scheffersomyces stipitis (strain ATCC 58785 / CBS 6054 / NBRC 10063 / NRRL Y-11545) (Yeast) protein is UPF0507 protein PICST_55861.